Reading from the N-terminus, the 347-residue chain is Protein RecA (347 aa).

64-71 serves as a coordination point for ATP; the sequence is GPESSGKT.

The protein belongs to the RecA family.

The protein localises to the cytoplasm. Functionally, can catalyze the hydrolysis of ATP in the presence of single-stranded DNA, the ATP-dependent uptake of single-stranded DNA by duplex DNA, and the ATP-dependent hybridization of homologous single-stranded DNAs. It interacts with LexA causing its activation and leading to its autocatalytic cleavage. In Bartonella tribocorum (strain CIP 105476 / IBS 506), this protein is Protein RecA.